We begin with the raw amino-acid sequence, 309 residues long: Elongation factor Ts (309 aa).

The tract at residues 82 to 85 (TDFV) is involved in Mg(2+) ion dislocation from EF-Tu.

Belongs to the EF-Ts family.

The protein resides in the cytoplasm. Associates with the EF-Tu.GDP complex and induces the exchange of GDP to GTP. It remains bound to the aminoacyl-tRNA.EF-Tu.GTP complex up to the GTP hydrolysis stage on the ribosome. This Rickettsia rickettsii (strain Iowa) protein is Elongation factor Ts.